Reading from the N-terminus, the 348-residue chain is Serpentine receptor class beta-7 (348 aa).

The next 7 helical transmembrane spans lie at 31 to 51, 63 to 83, 107 to 127, 145 to 165, 191 to 211, 241 to 261, and 280 to 300; these read QLIM…FQLL, LVGY…EAFI, GNLL…SITF, FLGP…ILLI, MFFI…FLLL, ISVI…TILL, and GAFM…SVYF.

This sequence belongs to the nematode receptor-like protein srb family.

The protein localises to the membrane. The polypeptide is Serpentine receptor class beta-7 (srb-7) (Caenorhabditis elegans).